The chain runs to 188 residues: Elongation factor P (188 aa).

Belongs to the elongation factor P family.

The protein localises to the cytoplasm. It participates in protein biosynthesis; polypeptide chain elongation. In terms of biological role, involved in peptide bond synthesis. Stimulates efficient translation and peptide-bond synthesis on native or reconstituted 70S ribosomes in vitro. Probably functions indirectly by altering the affinity of the ribosome for aminoacyl-tRNA, thus increasing their reactivity as acceptors for peptidyl transferase. This Rickettsia africae (strain ESF-5) protein is Elongation factor P.